The chain runs to 367 residues: Undecaprenyl-phosphate alpha-N-acetylglucosaminyl 1-phosphate transferase (367 aa).

9 helical membrane passes run 3–23 (LLTA…FIFL), 45–65 (GVIP…MFGL), 69–89 (YIPH…VGAM), 129–149 (WELV…WAAI), 158–178 (IDGL…LILW), 187–207 (MWCF…LGIL), 213–233 (VFMG…LLLE), 242–262 (ISPV…VAIM), and 318–338 (VPEW…GYCI).

It belongs to the glycosyltransferase 4 family. WecA subfamily. Requires Mg(2+) as cofactor. Mn(2+) is required as a cofactor.

Its subcellular location is the cell inner membrane. It catalyses the reaction di-trans,octa-cis-undecaprenyl phosphate + UDP-N-acetyl-alpha-D-glucosamine = N-acetyl-alpha-D-glucosaminyl-di-trans,octa-cis-undecaprenyl diphosphate + UMP. Its pathway is bacterial outer membrane biogenesis; LPS O-antigen biosynthesis. It functions in the pathway bacterial outer membrane biogenesis; enterobacterial common antigen biosynthesis. Its function is as follows. Catalyzes the transfer of the GlcNAc-1-phosphate moiety from UDP-GlcNAc onto the carrier lipid undecaprenyl phosphate (C55-P), yielding GlcNAc-pyrophosphoryl-undecaprenyl (GlcNAc-PP-C55). This is Undecaprenyl-phosphate alpha-N-acetylglucosaminyl 1-phosphate transferase from Salmonella typhi.